The sequence spans 140 residues: Nucleoside diphosphate kinase (140 aa).

ATP is bound by residues K11, F59, R87, T93, R104, and N114. H117 acts as the Pros-phosphohistidine intermediate in catalysis.

This sequence belongs to the NDK family. As to quaternary structure, homotetramer. The cofactor is Mg(2+).

It localises to the cytoplasm. The catalysed reaction is a 2'-deoxyribonucleoside 5'-diphosphate + ATP = a 2'-deoxyribonucleoside 5'-triphosphate + ADP. The enzyme catalyses a ribonucleoside 5'-diphosphate + ATP = a ribonucleoside 5'-triphosphate + ADP. Functionally, major role in the synthesis of nucleoside triphosphates other than ATP. The ATP gamma phosphate is transferred to the NDP beta phosphate via a ping-pong mechanism, using a phosphorylated active-site intermediate. This chain is Nucleoside diphosphate kinase, found in Nitrobacter hamburgensis (strain DSM 10229 / NCIMB 13809 / X14).